The chain runs to 980 residues: Peroxisomal ATPase PEX6 (980 aa).

Arg119 carries the omega-N-methylarginine modification. Residues 470–477 and 744–751 each bind ATP; these read GPPGSGKT and GPPGTGKT.

It belongs to the AAA ATPase family. Interacts with PEX1; forming the PEX1-PEX6 AAA ATPase complex, which is composed of a heterohexamer formed by a trimer of PEX1-PEX6 dimers. Interacts with PEX26; interaction is direct and promotes recruitment to peroxisomal membranes. Interacts with ZFAND6.

It localises to the cytoplasm. The protein resides in the cytosol. The protein localises to the peroxisome membrane. Its subcellular location is the cell projection. It is found in the cilium. It localises to the photoreceptor outer segment. The catalysed reaction is ATP + H2O = ADP + phosphate + H(+). Its function is as follows. Component of the PEX1-PEX6 AAA ATPase complex, a protein dislocase complex that mediates the ATP-dependent extraction of the PEX5 receptor from peroxisomal membranes, an essential step for PEX5 recycling. Specifically recognizes PEX5 monoubiquitinated at 'Cys-11', and pulls it out of the peroxisome lumen through the PEX2-PEX10-PEX12 retrotranslocation channel. Extraction by the PEX1-PEX6 AAA ATPase complex is accompanied by unfolding of the TPR repeats and release of bound cargo from PEX5. This chain is Peroxisomal ATPase PEX6, found in Cricetulus griseus (Chinese hamster).